Here is a 549-residue protein sequence, read N- to C-terminus: Glucose-6-phosphate isomerase (549 aa).

Glutamate 353 (proton donor) is an active-site residue. Catalysis depends on residues histidine 384 and lysine 512.

The protein belongs to the GPI family.

The protein resides in the cytoplasm. It catalyses the reaction alpha-D-glucose 6-phosphate = beta-D-fructose 6-phosphate. It functions in the pathway carbohydrate biosynthesis; gluconeogenesis. Its pathway is carbohydrate degradation; glycolysis; D-glyceraldehyde 3-phosphate and glycerone phosphate from D-glucose: step 2/4. In terms of biological role, catalyzes the reversible isomerization of glucose-6-phosphate to fructose-6-phosphate. In Solidesulfovibrio magneticus (strain ATCC 700980 / DSM 13731 / RS-1) (Desulfovibrio magneticus), this protein is Glucose-6-phosphate isomerase.